Here is a 104-residue protein sequence, read N- to C-terminus: ATP-dependent Clp protease adapter protein ClpS (104 aa).

It belongs to the ClpS family. As to quaternary structure, binds to the N-terminal domain of the chaperone ClpA.

Functionally, involved in the modulation of the specificity of the ClpAP-mediated ATP-dependent protein degradation. This chain is ATP-dependent Clp protease adapter protein ClpS, found in Bordetella avium (strain 197N).